The sequence spans 431 residues: 4-hydroxy-3-methylbut-2-en-1-yl diphosphate synthase (flavodoxin) (431 aa).

Over residues 1 to 12 (MNKLENPLRDDV) the composition is skewed to basic and acidic residues. The segment at 1 to 20 (MNKLENPLRDDVAGPAPRHQ) is disordered. Positions 310, 313, 356, and 363 each coordinate [4Fe-4S] cluster.

The protein belongs to the IspG family. [4Fe-4S] cluster is required as a cofactor.

It carries out the reaction (2E)-4-hydroxy-3-methylbut-2-enyl diphosphate + oxidized [flavodoxin] + H2O + 2 H(+) = 2-C-methyl-D-erythritol 2,4-cyclic diphosphate + reduced [flavodoxin]. It functions in the pathway isoprenoid biosynthesis; isopentenyl diphosphate biosynthesis via DXP pathway; isopentenyl diphosphate from 1-deoxy-D-xylulose 5-phosphate: step 5/6. Functionally, converts 2C-methyl-D-erythritol 2,4-cyclodiphosphate (ME-2,4cPP) into 1-hydroxy-2-methyl-2-(E)-butenyl 4-diphosphate. This Rhodopseudomonas palustris (strain TIE-1) protein is 4-hydroxy-3-methylbut-2-en-1-yl diphosphate synthase (flavodoxin).